The following is a 102-amino-acid chain: Small ribosomal subunit protein uS10 (102 aa).

This sequence belongs to the universal ribosomal protein uS10 family. As to quaternary structure, part of the 30S ribosomal subunit.

Its function is as follows. Involved in the binding of tRNA to the ribosomes. The chain is Small ribosomal subunit protein uS10 from Streptococcus pyogenes serotype M3 (strain SSI-1).